We begin with the raw amino-acid sequence, 124 residues long: Small ribosomal subunit protein uS12 (124 aa).

A disordered region spans residues 1–20 (MPTIQQLVRKGRTPKVVKTK). Over residues 9-18 (RKGRTPKVVK) the composition is skewed to basic residues. At Asp-89 the chain carries 3-methylthioaspartic acid.

Belongs to the universal ribosomal protein uS12 family. In terms of assembly, part of the 30S ribosomal subunit. Contacts proteins S8 and S17. May interact with IF1 in the 30S initiation complex.

In terms of biological role, with S4 and S5 plays an important role in translational accuracy. Functionally, interacts with and stabilizes bases of the 16S rRNA that are involved in tRNA selection in the A site and with the mRNA backbone. Located at the interface of the 30S and 50S subunits, it traverses the body of the 30S subunit contacting proteins on the other side and probably holding the rRNA structure together. The combined cluster of proteins S8, S12 and S17 appears to hold together the shoulder and platform of the 30S subunit. In Clavibacter michiganensis subsp. michiganensis (strain NCPPB 382), this protein is Small ribosomal subunit protein uS12.